The sequence spans 419 residues: Phosphatidylcholine:ceramide cholinephosphotransferase 1 (419 aa).

The SAM domain occupies 13-76 (WSPKKVADWL…LDMIETLKME (64 aa)). S14 is subject to Phosphoserine. 5 consecutive transmembrane segments (helical) span residues 142–162 (LLAF…ISVV), 190–210 (FSIC…QWLL), 221–241 (FFCI…VTTL), 282–302 (MCGD…YLFI), and 310–330 (LWWY…CILL). Residue H291 is part of the active site. The Cytoplasmic portion of the chain corresponds to 331–419 (AHDHYTVDVV…VKYSRLVNDT (89 aa)). Active-site residues include H334 and D338.

Belongs to the sphingomyelin synthase family.

It is found in the golgi apparatus membrane. The catalysed reaction is an N-acylsphing-4-enine + a 1,2-diacyl-sn-glycero-3-phosphocholine = a sphingomyelin + a 1,2-diacyl-sn-glycerol. It catalyses the reaction 1-(9Z-octadecenoyl)-2-acyl-sn-3-glycerol + a sphingomyelin = a 1-(9Z-octadecenoyl)-2-acyl-sn-glycero-3-phosphocholine + an N-acylsphing-4-enine. It carries out the reaction N-hexadecanoylsphinganine + a 1,2-diacyl-sn-glycero-3-phosphocholine = N-hexadecanoyl-sphinganine-1-phosphocholine + a 1,2-diacyl-sn-glycerol. The enzyme catalyses N-hexadecanoyl-(4R)-hydroxysphinganine + a 1,2-diacyl-sn-glycero-3-phosphocholine = N-hexadecanoyl-(4R)-hydroxysphinganine-phosphocholine + a 1,2-diacyl-sn-glycerol. The catalysed reaction is an N-acylsphing-4-enine + a 1,2-diacyl-sn-glycero-3-phosphoethanolamine = an N-acylsphing-4-enine 1-phosphoethanolamine + a 1,2-diacyl-sn-glycerol. It functions in the pathway sphingolipid metabolism. Major sphingomyelin synthase at the Golgi apparatus. Catalyzes the reversible transfer of phosphocholine moiety in sphingomyelin biosynthesis: in the forward reaction transfers phosphocholine head group of phosphatidylcholine (PC) on to ceramide (CER) to form ceramide phosphocholine (sphingomyelin, SM) and diacylglycerol (DAG) as by-product, and in the reverse reaction transfers phosphocholine from SM to DAG to form PC and CER. The direction of the reaction depends on the levels of CER and DAG in Golgi membranes. Converts the newly synthesized CER, that is transported from the endoplasmic reticulum to the trans-Golgi by the Cer transport protein (CERT), to SM. Can form a heteromeric complex with glucosylceramide synthase (GCS) increasing SMS activity and reducing glucosylceramide synthesis, a critical mechanism that controls the metabolic fate of CER in the Golgi. Does not use free phosphorylcholine or CDP-choline as donor. Can also transfer phosphoethanolamine head group of phosphatidylethanolamine (PE) on to CER to form ceramide phosphoethanolamine (CPE). Regulates receptor-mediated signal transduction via mitogenic DAG and proapoptotic CER, as well as via SM, a structural component of membrane rafts that serve as platforms for signal transduction and protein sorting. Plays a role in secretory transport via regulation of DAG pool at the Golgi apparatus and its downstream effects on PRKD1. The sequence is that of Phosphatidylcholine:ceramide cholinephosphotransferase 1 (Sgms1) from Rattus norvegicus (Rat).